The primary structure comprises 86 residues: Centromere protein W (86 aa).

This sequence belongs to the CENP-W/WIP1 family. In terms of assembly, heterodimer with CENPT; this dimer coassembles with CENPS-CENPX heterodimers at centromeres to form the tetrameric CENP-T-W-S-X complex, which is a subcomplex of the large constitutive centromere-associated network (CCAN, also known as the interphase centromere complex or ICEN). Interacts with NPM1.

It localises to the nucleus. The protein resides in the chromosome. The protein localises to the centromere. It is found in the kinetochore. Its subcellular location is the nucleus matrix. It localises to the nucleolus. In terms of biological role, component of the CENPA-NAC (nucleosome-associated) complex, a complex that plays a central role in assembly of kinetochore proteins, mitotic progression and chromosome segregation. The CENPA-NAC complex recruits the CENPA-CAD (nucleosome distal) complex and may be involved in incorporation of newly synthesized CENPA into centromeres. Part of a nucleosome-associated complex that binds specifically to histone H3-containing nucleosomes at the centromere, as opposed to nucleosomes containing CENPA. Component of the heterotetrameric CENP-T-W-S-X complex that binds and supercoils DNA, and plays an important role in kinetochore assembly. CENPW has a fundamental role in kinetochore assembly and function. It is one of the inner kinetochore proteins, with most further proteins binding downstream. Required for normal chromosome organization and normal progress through mitosis. The protein is Centromere protein W (Cenpw) of Mus musculus (Mouse).